The following is a 381-amino-acid chain: NF-kappa-B inhibitor-like protein 1 (381 aa).

The segment at 1–34 is disordered; sequence MSNPSPQAPEEEASTSVCRPQSCSMASASRRHRR. Residues 14–27 are compositionally biased toward polar residues; that stretch reads STSVCRPQSCSMAS. ANK repeat units follow at residues 64 to 93 and 97 to 134; these read AGQP…ADPA and RHGD…IKNK. Disordered regions lie at residues 132–167 and 186–298; these read KNKD…REWR and EDDA…WRFG. At S151 the chain carries Phosphoserine. The segment covering 151-160 has biased composition (acidic residues); sequence SAEEEEDEEV. Basic and acidic residues-rich tracts occupy residues 205 to 218 and 237 to 290; these read RLAR…RQQL and RQHE…RGAE.

In terms of assembly, interacts with CACTIN (via N-terminal domain); the interaction occurs in a pro-inflammatory-independent manner. In terms of tissue distribution, high expression found in heart muscle, liver, kidney and skin. Not detected in spleen, lung and brain.

The protein resides in the nucleus. In terms of biological role, involved in the regulation of innate immune response. Acts as negative regulator of Toll-like receptor and interferon-regulatory factor (IRF) signaling pathways. Contributes to the negative regulation of transcriptional activation of NF-kappa-B target genes in response to endogenous pro-inflammatory stimuli. The sequence is that of NF-kappa-B inhibitor-like protein 1 (Nfkbil1) from Mus musculus (Mouse).